A 170-amino-acid chain; its full sequence is 3-hydroxydecanoyl-[acyl-carrier-protein] dehydratase (170 aa).

Histidine 71 is a catalytic residue.

It belongs to the thioester dehydratase family. FabA subfamily. In terms of assembly, homodimer.

Its subcellular location is the cytoplasm. The catalysed reaction is a (3R)-hydroxyacyl-[ACP] = a (2E)-enoyl-[ACP] + H2O. The enzyme catalyses (3R)-hydroxydecanoyl-[ACP] = (2E)-decenoyl-[ACP] + H2O. It carries out the reaction (2E)-decenoyl-[ACP] = (3Z)-decenoyl-[ACP]. It participates in lipid metabolism; fatty acid biosynthesis. Necessary for the introduction of cis unsaturation into fatty acids. Catalyzes the dehydration of (3R)-3-hydroxydecanoyl-ACP to E-(2)-decenoyl-ACP and then its isomerization to Z-(3)-decenoyl-ACP. Can catalyze the dehydratase reaction for beta-hydroxyacyl-ACPs with saturated chain lengths up to 16:0, being most active on intermediate chain length. The chain is 3-hydroxydecanoyl-[acyl-carrier-protein] dehydratase from Chelativorans sp. (strain BNC1).